Reading from the N-terminus, the 683-residue chain is E3 ubiquitin-protein ligase WAVH1 (683 aa).

An RING-type; atypical zinc finger spans residues 130–176; the sequence is CGICLQSVKSGQGTAIFTAECSHTFHFPCVTSRAAANHNRLASCPVC. In terms of domain architecture, VWFA spans 302–438; sequence DLVAVLDVSG…AHSRIPIHTI (137 aa).

As to expression, expressed in root tips and leaf primordia.

It carries out the reaction S-ubiquitinyl-[E2 ubiquitin-conjugating enzyme]-L-cysteine + [acceptor protein]-L-lysine = [E2 ubiquitin-conjugating enzyme]-L-cysteine + N(6)-ubiquitinyl-[acceptor protein]-L-lysine.. Functionally, E3 ubiquitin-protein ligase involved in the regulation of root growth. Acts as a positive regulator of root gravitropism. Possesses E3 protein ligase activity in vitro. This Arabidopsis thaliana (Mouse-ear cress) protein is E3 ubiquitin-protein ligase WAVH1.